Reading from the N-terminus, the 808-residue chain is Beta-catenin/armadillo-related protein 1 (808 aa).

The involved in transcriptional activation stretch occupies residues 1-85 (MDLDPNLVIN…SSHLSGMSSM (85 aa)). ARM repeat units lie at residues 118–160 (RAIP…NETK), 165–209 (CVIF…RAIS), and 369–408 (SDVP…NLVA). The involved in transcriptional activation stretch occupies residues 541-808 (NVQDVIEGVR…DQYPYRQGRF (268 aa)). A disordered region spans residues 702–808 (TYEGAGEQWS…DQYPYRQGRF (107 aa)). Over residues 723–736 (YCNSSGRDSSKTYN) the composition is skewed to polar residues. Residues 737–750 (SPMYHSPPSMYPEY) show a composition bias toward low complexity. Positions 786–798 (NIPSNQGPSSHLS) are enriched in polar residues.

Belongs to the beta-catenin family. Interacts with apr-1, axl-1, daf-16, lin-23, and pop-1 (via acidic region in N-terminus 1-44). Interacts (via ARM repeats) with pry-1.

It localises to the cytoplasm. The protein resides in the nucleus. It is found in the membrane. Its subcellular location is the cell junction. Its function is as follows. Participates in the Wnt signaling pathway which affects cell fate and may regulate the stem cell divisions of seam cells during larval development. Functions as a transcriptional activator but is dependent on the interaction with pop-1. Involved in maintaining lin-39 Hox expression and regulating glr-1 abundance at the synapses. Required for mab-5 expression during Q neuroblast migration and for oxidative stress-induced daf-16 signaling. Has roles in egg laying, vulva precursor cell fate determination, Q neuroblast migration, posterior ectodermal cell P12 specification, movement, body length, male tail development and dauer induction. Functionally redundant to wrm-1 and hmp-2. This chain is Beta-catenin/armadillo-related protein 1 (bar-1), found in Caenorhabditis briggsae.